Reading from the N-terminus, the 293-residue chain is Lysosomal amino acid transporter 1 homolog (293 aa).

The Lumenal portion of the chain corresponds to 1 to 37; that stretch reads MVWRTLGASNFSTCPNGSVQWIWDVFGECAQDGWDEA. N-linked (GlcNAc...) asparagine glycans are attached at residues Asn-10 and Asn-16. The PQ-loop 1 domain maps to 34 to 100; the sequence is WDEASVGLGL…LADQLPLQTY (67 aa). A helical membrane pass occupies residues 38–58; the sequence is SVGLGLVSILCFAASTFPQYI. Residues 59-71 are Cytoplasmic-facing; sequence KACKTGNMDQALS. The helical transmembrane segment at 72–92 threads the bilayer; it reads LWFLLGWIGGDSCNLIGSFLA. The Lumenal segment spans residues 93 to 96; that stretch reads DQLP. A helical membrane pass occupies residues 97–117; the sequence is LQTYTAVYYVLADLMMLTLYF. Residues 118–127 are Cytoplasmic-facing; it reads HYKFKKRPSP. Residues 128–148 traverse the membrane as a helical segment; that stretch reads LSAPINSVLLFILGTVCITPL. The Lumenal segment spans residues 149 to 182; it reads LSSTDPVAVPREGFRGRTLLSVEPGNKPFTKKEV. Residues 183 to 203 traverse the membrane as a helical segment; the sequence is IGFVIGSASSLLYLLSRLPQI. The PQ-loop 2 domain maps to 191 to 243; that stretch reads SSLLYLLSRLPQIRTNFIRQSTQGISYSLFALVMLGNTLYGLSVLLKNPEVGQ. Residues 204 to 214 lie on the Cytoplasmic side of the membrane; sequence RTNFIRQSTQG. Residues 215–235 form a helical membrane-spanning segment; that stretch reads ISYSLFALVMLGNTLYGLSVL. Over 236–254 the chain is Lumenal; it reads LKNPEVGQSEGSYLLHHLP. A helical transmembrane segment spans residues 255–275; it reads WLVGSLGVLLLDTIISIQFLV. Residues 276 to 293 are Cytoplasmic-facing; sequence YRSHETAAASEREPLLPS. Positions 290–291 match the Di-leucine motif motif; that stretch reads LL.

Belongs to the laat-1 family. Ubiquitously expressed.

The protein resides in the lysosome membrane. Functionally, amino acid transporter that specifically mediates the pH-dependent export of the cationic amino acids arginine, histidine and lysine from lysosomes. This Mus musculus (Mouse) protein is Lysosomal amino acid transporter 1 homolog.